A 415-amino-acid chain; its full sequence is Serine hydroxymethyltransferase (415 aa).

(6S)-5,6,7,8-tetrahydrofolate is bound by residues L117 and 121-123 (GHL). Residue K226 is modified to N6-(pyridoxal phosphate)lysine. Residues E241 and 349-351 (SPF) contribute to the (6S)-5,6,7,8-tetrahydrofolate site.

Belongs to the SHMT family. In terms of assembly, homodimer. It depends on pyridoxal 5'-phosphate as a cofactor.

It is found in the cytoplasm. The enzyme catalyses (6R)-5,10-methylene-5,6,7,8-tetrahydrofolate + glycine + H2O = (6S)-5,6,7,8-tetrahydrofolate + L-serine. Its pathway is one-carbon metabolism; tetrahydrofolate interconversion. It functions in the pathway amino-acid biosynthesis; glycine biosynthesis; glycine from L-serine: step 1/1. In terms of biological role, catalyzes the reversible interconversion of serine and glycine with tetrahydrofolate (THF) serving as the one-carbon carrier. This reaction serves as the major source of one-carbon groups required for the biosynthesis of purines, thymidylate, methionine, and other important biomolecules. Also exhibits THF-independent aldolase activity toward beta-hydroxyamino acids, producing glycine and aldehydes, via a retro-aldol mechanism. This is Serine hydroxymethyltransferase from Trichlorobacter lovleyi (strain ATCC BAA-1151 / DSM 17278 / SZ) (Geobacter lovleyi).